The primary structure comprises 274 residues: Orotidine 5'-phosphate decarboxylase (274 aa).

Lys-95 (proton donor) is an active-site residue.

This sequence belongs to the OMP decarboxylase family. Type 2 subfamily.

It catalyses the reaction orotidine 5'-phosphate + H(+) = UMP + CO2. Its pathway is pyrimidine metabolism; UMP biosynthesis via de novo pathway; UMP from orotate: step 2/2. This chain is Orotidine 5'-phosphate decarboxylase, found in Mycolicibacterium paratuberculosis (strain ATCC BAA-968 / K-10) (Mycobacterium paratuberculosis).